The sequence spans 109 residues: Large ribosomal subunit protein uL24 (109 aa).

The protein belongs to the universal ribosomal protein uL24 family. As to quaternary structure, part of the 50S ribosomal subunit.

Its function is as follows. One of two assembly initiator proteins, it binds directly to the 5'-end of the 23S rRNA, where it nucleates assembly of the 50S subunit. In terms of biological role, one of the proteins that surrounds the polypeptide exit tunnel on the outside of the subunit. In Rickettsia massiliae (strain Mtu5), this protein is Large ribosomal subunit protein uL24.